The following is a 318-amino-acid chain: Xanthocillin biosynthesis cluster transcription factor xanC (318 aa).

Positions 1–27 are enriched in basic and acidic residues; sequence MHSQTTKDEQSKDDSSNEKQDAIERRR. The interval 1–39 is disordered; the sequence is MHSQTTKDEQSKDDSSNEKQDAIERRRLQNRLSQRNHRR. Positions 20–52 constitute a bZIP domain; that stretch reads QDAIERRRLQNRLSQRNHRRKIRDRIAKLQERV. Residues 25–40 are basic motif; that stretch reads RRRLQNRLSQRNHRRK. The leucine-zipper stretch occupies residues 41 to 48; sequence IRDRIAKL. Disordered regions lie at residues 71–107, 123–171, and 269–318; these read PPAA…QRNV, PSSS…FSLD, and GRHC…SMML. Low complexity-rich tracts occupy residues 123 to 139 and 147 to 171; these read PSSS…PFDL and STNS…FSLD. The segment covering 293-318 has biased composition (polar residues); it reads APSSTPFCPLHPSQSSSLDNYQSMML.

The protein belongs to the bZIP family.

It localises to the nucleus. Its function is as follows. Transcription regulator that specifically up-regulates the gene cluster that mediates the biosynthesis of the isocyanide xanthocillin and its derivatives. The sequence is that of Xanthocillin biosynthesis cluster transcription factor xanC from Aspergillus fumigatus (strain ATCC MYA-4609 / CBS 101355 / FGSC A1100 / Af293) (Neosartorya fumigata).